Consider the following 49-residue polypeptide: SPbeta prophage-derived uncharacterized protein YorN (49 aa).

This chain is SPbeta prophage-derived uncharacterized protein YorN (yorN), found in Bacillus subtilis (strain 168).